Consider the following 2276-residue polypeptide: Non-reducing polyketide synthase VdtA (2276 aa).

The tract at residues 8–243 is N-terminal acylcarrier protein transacylase (SAT) domain; sequence YLFGDQTYDY…KDIPIHAPYH (236 aa). A Ketosynthase family 3 (KS3) domain is found at 372 to 804; sequence RAKIAIVGMS…GGNSSVLVED (433 aa). Active-site for beta-ketoacyl synthase activity residues include cysteine 544, histidine 679, and histidine 723. The segment at 905–1206 is malonyl-CoA:ACP transacylase (MAT) domain; sequence FTFTGQGAQY…KALPTLQRNR (302 aa). Residue serine 996 is the For acyl/malonyl transferase activity of the active site. The interval 1300-1616 is product template (PT) domain; that stretch reads TTTLHRIVDE…PRRVLRYILQ (317 aa). The tract at residues 1304–1438 is N-terminal hotdog fold; the sequence is HRIVDEKSTE…CRIKFSDRST (135 aa). In terms of domain architecture, PKS/mFAS DH spans 1304 to 1612; it reads HRIVDEKSTE…IQGVPRRVLR (309 aa). Histidine 1336 serves as the catalytic Proton acceptor; for dehydratase activity. The C-terminal hotdog fold stretch occupies residues 1465–1612; that stretch reads TYRFNGPMAY…IQGVPRRVLR (148 aa). Catalysis depends on aspartate 1525, which acts as the Proton donor; for dehydratase activity. A Carrier 1 domain is found at 1655–1729; the sequence is SGTLTEALRI…DLKRFFDKIN (75 aa). At serine 1689 the chain carries O-(pantetheine 4'-phosphoryl)serine. A disordered region spans residues 1735–1762; sequence APAPVSDAPKQLQPSSSPVASATPSAPI. A compositionally biased stretch (low complexity) spans 1748-1761; that stretch reads PSSSPVASATPSAP. The Carrier 2 domain maps to 1765 to 1839; sequence RSKFESVLNI…DLKAHFMSKN (75 aa). An O-(pantetheine 4'-phosphoryl)serine modification is found at serine 1799. Residues 1840–1854 show a composition bias toward polar residues; that stretch reads SDNGSSAVLTPQPSR. The interval 1840-1882 is disordered; sequence SDNGSSAVLTPQPSRDSALPERTRPRVADTSDEEDAPVSANEF. Over residues 1857–1868 the composition is skewed to basic and acidic residues; sequence ALPERTRPRVAD. The 79-residue stretch at 1886–1964 folds into the Carrier 3 domain; the sequence is ARSTSKYMAV…GLRSFFGFES (79 aa). Serine 1923 bears the O-(pantetheine 4'-phosphoryl)serine mark. Residues 1967 to 1993 are disordered; the sequence is TATNPTASQSSSSISSGTSVFDTSPSP. Residues 1969–1990 show a composition bias toward low complexity; sequence TNPTASQSSSSISSGTSVFDTS. Residues 2020–2271 are thioesterase (TE) domain; that stretch reads PLPPATSVTL…GADHFSLLVS (252 aa).

Its subcellular location is the cytoplasmic vesicle. The catalysed reaction is 7 malonyl-CoA + acetyl-CoA + 7 H(+) = 7,9,10-trihydroxy-3-(2-oxopropyl)-1H-benzo[g]isochromen-1-one + 7 CO2 + 8 CoA + 2 H2O. The protein operates within secondary metabolite biosynthesis. Functionally, non-reducing polyketide synthase; part of the gene cluster that mediates the biosynthesis of viriditoxin, one of the 'classical' secondary metabolites produced by fungi and that has antibacterial activity. The first step is performed by the polyketide synthase VdtA which condenses one acetyl-CoA and 6 malonyl-CoA units to form the heptaketide monomer backbone of viriditoxin. The product of VdtA is then O-methylated on C7 by the O-methyltransferase VdtC. The O-methyl group is important for the stereoselective coupling of the monomers at the final step of viriditoxin biosynthesis. The short-chain dehydrogenase/reductase VdtF then acts as a stereospecific reductase converting the pyrone to dihydropyrone via the reduction of the C3-C4 double bond. The FAD-binding monooxygenase VdtE then converts the ketone group into a methyl-ester group to yield semi-viriditoxin. Finally, the laccase VdtB is involved in dimerization of 2 semi-viriditoxin molecules to yield the final viriditoxin. VdtB is responsible for the regioselective 6,6'-coupling of semi-viriditoxin, which yields (M)-viriditoxin and (P)-viriditoxin at a ratio of 1:2. The non-catalytic carboxylesterase-like protein VdtD affects the stereochemistical outcome of the coupling. The highly reducing polyketide synthase VdtX is not involved in viriditoxin synthesis, but might possibly play a role in the production of additional metabolites not identified yet. The sequence is that of Non-reducing polyketide synthase VdtA from Byssochlamys spectabilis (Paecilomyces variotii).